The sequence spans 176 residues: Disulfide bond formation protein B (176 aa).

The Cytoplasmic segment spans residues 1–14 (MLRFLNQCSQGRGA). A helical transmembrane segment spans residues 15–31 (WLLMAFTALALELTALW). Topologically, residues 32 to 49 (FQHVMLLKPCVLCIYERC) are periplasmic. Cys41 and Cys44 are joined by a disulfide. The helical transmembrane segment at 50–65 (ALFGVLGAALIGAIAP) threads the bilayer. Residues 66–71 (KTPLRY) are Cytoplasmic-facing. Residues 72–89 (VAMVIWLYSAFRGVQLTY) traverse the membrane as a helical segment. Over 90 to 144 (EHTMLQLYPSPFATCDFMVRFPEWLPLDKWVPQVFVASGDCAERQWDFLGMEMPQ) the chain is Periplasmic. Cysteines 104 and 130 form a disulfide. A helical membrane pass occupies residues 145-163 (WLLGIFIAYLIVAVLVVIS). Residues 164 to 176 (QPFKAKKRDLFGR) are Cytoplasmic-facing.

Belongs to the DsbB family.

It localises to the cell inner membrane. Required for disulfide bond formation in some periplasmic proteins such as PhoA or OmpA. Acts by oxidizing the DsbA protein. In Shigella flexneri, this protein is Disulfide bond formation protein B.